Reading from the N-terminus, the 79-residue chain is Small ribosomal subunit protein bS18 (79 aa).

This sequence belongs to the bacterial ribosomal protein bS18 family. In terms of assembly, part of the 30S ribosomal subunit. Forms a tight heterodimer with protein bS6.

In terms of biological role, binds as a heterodimer with protein bS6 to the central domain of the 16S rRNA, where it helps stabilize the platform of the 30S subunit. The chain is Small ribosomal subunit protein bS18 from Streptococcus agalactiae serotype Ia (strain ATCC 27591 / A909 / CDC SS700).